A 128-amino-acid polypeptide reads, in one-letter code: Cyclic ether formation enzyme gkaZ (128 aa).

An N-terminal signal peptide occupies residues 1–36; sequence MTTARALSDGLAYLLACFNAFCIQAHLTSRFSPAFS. 2 consecutive transmembrane segments (helical) span residues 61–81 and 107–127; these read LRYM…LPGW and WLLH…AIYV.

This sequence belongs to the cyclic ether formation enzyme xenC family.

It localises to the membrane. It participates in mycotoxin biosynthesis. Its function is as follows. Cyclic ether formation enzyme; part of the gene cluster that mediates the biosynthesis of GKK1032, fungal natural products containing a macrocyclic para-cyclophane connected to a decahydrofluorene ring system that show potent antitumor activities. Within the pathway, gkaZ functions synergistically with gkaB and gkaX to form the cyclophane. The pathway begins with the PKS-NRPS gkaA which, with the help of the trans-enoyl reductase gkaC, synthesizes the polyketide-tyrosyl acyl thioester product which can be reductively off-loaded by the terminal reductase (R) domain in gkaA. The alpha/beta hydrolase gkaG is then required to catalyze the subsequent Knoevenagel condensation that affords the 3-pyrrolin-2-one ring, whereas the three proteins gkaB, gkaX and gkaZ then function synergistically to form the cyclophane. The protein is Cyclic ether formation enzyme gkaZ of Penicillium citrinum.